Reading from the N-terminus, the 427-residue chain is Glucose-1-phosphate adenylyltransferase (427 aa).

Residues tyrosine 121, glycine 186, glutamate 201–lysine 202, and serine 219 each bind alpha-D-glucose 1-phosphate.

This sequence belongs to the bacterial/plant glucose-1-phosphate adenylyltransferase family. Homotetramer.

It carries out the reaction alpha-D-glucose 1-phosphate + ATP + H(+) = ADP-alpha-D-glucose + diphosphate. It participates in glycan biosynthesis; glycogen biosynthesis. Functionally, involved in the biosynthesis of ADP-glucose, a building block required for the elongation reactions to produce glycogen. Catalyzes the reaction between ATP and alpha-D-glucose 1-phosphate (G1P) to produce pyrophosphate and ADP-Glc. This is Glucose-1-phosphate adenylyltransferase from Corynebacterium diphtheriae (strain ATCC 700971 / NCTC 13129 / Biotype gravis).